Reading from the N-terminus, the 1481-residue chain is Cystic fibrosis transmembrane conductance regulator (1481 aa).

The Cytoplasmic portion of the chain corresponds to 1-77; sequence MQRSPLEKAS…KLINALRRCF (77 aa). The chain crosses the membrane as a helical span at residues 78–98; it reads FWRFMFYGIILYLGEVTKAVQ. An ABC transmembrane type-1 1 domain is found at 81–365; sequence FMFYGIILYL…WAVQTWYDSL (285 aa). At 99–122 the chain is on the extracellular side; the sequence is PLLLGRIIASYDPDNKVERSIAIY. A helical transmembrane segment spans residues 123 to 146; the sequence is LGIGLCLLFIVRTLLLHPAIFGLH. The Cytoplasmic portion of the chain corresponds to 147–195; the sequence is HIGMQMRIAMFSLIYKKTLKLSSRVLDKISIGQLVSLLSNNLNKFDEGL. A helical transmembrane segment spans residues 196-216; it reads ALAHFVWIAPLQVTLLMGLLW. Residues 217–222 lie on the Extracellular side of the membrane; sequence ELLQAF. Residues 223–243 form a helical membrane-spanning segment; it reads TFCGLAFLVVLAFLQAGLGKM. Over 244-298 the chain is Cytoplasmic; it reads MMKYRDQRAGKINERLVITSEIIENIQSVKAYCWEEAMEKIIENLRQTELKLTRK. The helical transmembrane segment at 299-319 threads the bilayer; sequence AAYVRYLNSSAFFFSGFFVVF. The Extracellular portion of the chain corresponds to 320 to 339; sequence LSVLPYALLKGIILRKIFTT. A helical membrane pass occupies residues 340-358; sequence ISFCIVLRMAVTRQFPWAV. The Cytoplasmic portion of the chain corresponds to 359–858; the sequence is QTWYDSLGAI…YLRYITVHKS (500 aa). Residues tryptophan 401, 457 to 464, and glutamine 492 contribute to the ATP site; that span reads GSTGAGKT. The ABC transporter 1 domain maps to 423-645; sequence NGDNNLFFSN…RPDFSSKLMG (223 aa). Cysteine 523 carries the S-palmitoyl cysteine lipid modification. 2 positions are modified to phosphoserine: serine 548 and serine 659. The interval 653–831 is disordered R region; sequence TAERRNSIIT…EEINEEDLRD (179 aa). Residue serine 669 is modified to Phosphoserine; by PKA. The residue at position 685 (serine 685) is a Phosphoserine. Residue lysine 687 forms a Glycyl lysine isopeptide (Lys-Gly) (interchain with G-Cter in ubiquitin) linkage. 2 positions are modified to phosphoserine: serine 699 and serine 711. Residue threonine 716 is modified to Phosphothreonine. Residues serine 736, serine 767, serine 790, serine 795, and serine 813 each carry the phosphoserine modification. The chain crosses the membrane as a helical span at residues 859-879; the sequence is LMFVLIWCLVVFLAEVAASLV. In terms of domain architecture, ABC transmembrane type-1 2 spans 859–1155; that stretch reads LMFVLIWCLV…AVNSSIDVDS (297 aa). Residues 880-918 lie on the Extracellular side of the membrane; that stretch reads VLCLFPKILFQDKGNSTKSANNSYAVIITSTSSYYIFYI. Asparagine 894 and asparagine 900 each carry an N-linked (GlcNAc...) asparagine glycan. The discontinuously helical transmembrane segment at 919-939 threads the bilayer; it reads YVGVADTLLALGLFRGLPLVH. Residues 940-990 lie on the Cytoplasmic side of the membrane; that stretch reads TLITVSKTLHHKMLQSVLQAPMSTLNTLKTGGILNRFSKDIAVLDDLLPLT. Residues 991 to 1011 traverse the membrane as a helical segment; the sequence is IFDFVQLLLIVIGAVVVVSVL. The Extracellular portion of the chain corresponds to 1012–1013; that stretch reads QP. The helical transmembrane segment at 1014–1034 threads the bilayer; it reads YIFLATVPVIAAFILLRAYFL. Over 1035–1095 the chain is Cytoplasmic; sequence HTSQQLKQLE…TANWFLYLST (61 aa). Residues 1096–1116 form a helical membrane-spanning segment; that stretch reads LRWFQMRIEMIFVIFFIAVTF. Topologically, residues 1117–1130 are extracellular; sequence ISILTTGEGEGRVG. A helical transmembrane segment spans residues 1131 to 1151; it reads IILTLAMNIMGTLQWAVNSSI. Over 1152–1481 the chain is Cytoplasmic; it reads DVDSLMRSVS…TEEEVQETKL (330 aa). Residues 1211 to 1444 form the ABC transporter 2 domain; that stretch reads MTVKDLTAKY…KSLFRQAISP (234 aa). ATP contacts are provided by residues tyrosine 1220 and 1245–1252; that span reads GRTGSGKS. An interaction with GORASP2 region spans residues 1387-1481; that stretch reads RTLKQAFADC…TEEEVQETKL (95 aa). The S-palmitoyl cysteine moiety is linked to residue cysteine 1396. The segment at 1452 to 1481 is disordered; that stretch reads PQRNSSRQKSRSNIAALKEETEEEVQETKL. The segment covering 1453-1464 has biased composition (low complexity); the sequence is QRNSSRQKSRSN. Residue serine 1457 is modified to Phosphoserine. Acidic residues predominate over residues 1471–1481; that stretch reads ETEEEVQETKL. The PDZ-binding signature appears at 1479 to 1481; the sequence is TKL.

Belongs to the ABC transporter superfamily. ABCC family. CFTR transporter (TC 3.A.1.202) subfamily. As to quaternary structure, monomer; does not require oligomerization for channel activity. May form oligomers in the membrane. Interacts with SLC26A3, SLC26A6 and NHERF1. Interacts with SHANK2. Interacts with MYO6. Interacts (via C-terminus) with GOPC (via PDZ domain); this promotes CFTR internalization and thereby decreases channel activity. Interacts with SLC4A7 through NHERF1. Found in a complex with MYO5B and RAB11A. Interacts with ANO1. Interacts with SLC26A8. Interacts with AHCYL1; the interaction increases CFTR activity. Interacts with CSE1L. The core-glycosylated form interacts with GORASP2 (via PDZ GRASP-type 1 domain) in respone to ER stress. Interacts with MARCHF2; the interaction leads to CFTR ubiqtuitination and degradation. Interacts with ADGRG2. N-glycosylated. Post-translationally, phosphorylated; cAMP treatment promotes phosphorylation and activates the channel. Dephosphorylation decreases the ATPase activity (in vitro). Phosphorylation at PKA sites activates the channel. Phosphorylation at PKC sites enhances the response to phosphorylation by PKA. Phosphorylated by AMPK; this inhibits channel activity. In terms of processing, ubiquitinated, leading to its degradation in the lysosome. Deubiquitination by USP10 in early endosomes enhances its endocytic recycling to the cell membrane. Ubiquitinated by RNF185 during ER stress. Ubiquitinated by MARCHF2.

It localises to the apical cell membrane. Its subcellular location is the early endosome membrane. The protein resides in the cell membrane. The protein localises to the recycling endosome membrane. It is found in the endoplasmic reticulum membrane. It localises to the nucleus. The enzyme catalyses ATP + H2O + closed Cl(-) channel = ADP + phosphate + open Cl(-) channel.. It catalyses the reaction chloride(in) = chloride(out). It carries out the reaction hydrogencarbonate(in) = hydrogencarbonate(out). The catalysed reaction is ATP + H2O = ADP + phosphate + H(+). Epithelial ion channel that plays an important role in the regulation of epithelial ion and water transport and fluid homeostasis. Mediates the transport of chloride ions across the cell membrane. Possesses an intrinsic ATPase activity and utilizes ATP to gate its channel; the passive flow of anions through the channel is gated by cycles of ATP binding and hydrolysis by the ATP-binding domains. The ion channel is also permeable to HCO(3)(-); selectivity depends on the extracellular chloride concentration. Exerts its function also by modulating the activity of other ion channels and transporters. Contributes to the regulation of the pH and the ion content of the epithelial fluid layer. Modulates the activity of the epithelial sodium channel (ENaC) complex, in part by regulating the cell surface expression of the ENaC complex. May regulate bicarbonate secretion and salvage in epithelial cells by regulating the transporter SLC4A7. Can inhibit the chloride channel activity of ANO1. Plays a role in the chloride and bicarbonate homeostasis during sperm epididymal maturation and capacitation. In Muntiacus muntjak (Barking deer), this protein is Cystic fibrosis transmembrane conductance regulator.